Consider the following 35-residue polypeptide: Conotoxin Cal6.1f (35 aa).

The propeptide occupies Gly1–Arg8. Intrachain disulfides connect Cys9–Cys25, Cys16–Cys29, and Cys24–Cys34.

The protein belongs to the conotoxin O1 superfamily. In terms of tissue distribution, expressed by the venom duct.

The protein localises to the secreted. In terms of biological role, probable neurotoxin with unknown target. Possibly targets ion channels. The chain is Conotoxin Cal6.1f from Californiconus californicus (California cone).